Consider the following 469-residue polypeptide: Sulfate adenylyltransferase subunit 1 (469 aa).

A tr-type G domain is found at 22 to 238 (KQLLRFITCG…LETIKIDEDR (217 aa)). The G1 stretch occupies residues 31-38 (GSVDDGKS). 31-38 (GSVDDGKS) contributes to the GTP binding site. The interval 89-93 (GITID) is G2. Residues 110–113 (DTPG) form a G3 region. Residues 110–114 (DTPGH) and 165–168 (NKMD) each bind GTP. The interval 165 to 168 (NKMD) is G4. The segment at 203 to 205 (SAL) is G5.

Belongs to the TRAFAC class translation factor GTPase superfamily. Classic translation factor GTPase family. CysN/NodQ subfamily. In terms of assembly, heterodimer composed of CysD, the smaller subunit, and CysN.

The enzyme catalyses sulfate + ATP + H(+) = adenosine 5'-phosphosulfate + diphosphate. The protein operates within sulfur metabolism; hydrogen sulfide biosynthesis; sulfite from sulfate: step 1/3. In terms of biological role, with CysD forms the ATP sulfurylase (ATPS) that catalyzes the adenylation of sulfate producing adenosine 5'-phosphosulfate (APS) and diphosphate, the first enzymatic step in sulfur assimilation pathway. APS synthesis involves the formation of a high-energy phosphoric-sulfuric acid anhydride bond driven by GTP hydrolysis by CysN coupled to ATP hydrolysis by CysD. The polypeptide is Sulfate adenylyltransferase subunit 1 (Aliarcobacter butzleri (strain RM4018) (Arcobacter butzleri)).